Reading from the N-terminus, the 267-residue chain is GTP cyclohydrolase FolE2 (267 aa).

This sequence belongs to the GTP cyclohydrolase IV family.

The catalysed reaction is GTP + H2O = 7,8-dihydroneopterin 3'-triphosphate + formate + H(+). Its pathway is cofactor biosynthesis; 7,8-dihydroneopterin triphosphate biosynthesis; 7,8-dihydroneopterin triphosphate from GTP: step 1/1. In terms of biological role, converts GTP to 7,8-dihydroneopterin triphosphate. In Nitrosomonas eutropha (strain DSM 101675 / C91 / Nm57), this protein is GTP cyclohydrolase FolE2.